Here is a 120-residue protein sequence, read N- to C-terminus: Chaperonin GroEL (120 aa).

ATP is bound at residue 23–27; that stretch reads DGTTT.

This sequence belongs to the chaperonin (HSP60) family. In terms of assembly, forms a cylinder of 14 subunits composed of two heptameric rings stacked back-to-back. Interacts with the co-chaperonin GroES.

Its subcellular location is the cytoplasm. It carries out the reaction ATP + H2O + a folded polypeptide = ADP + phosphate + an unfolded polypeptide.. In terms of biological role, together with its co-chaperonin GroES, plays an essential role in assisting protein folding. The GroEL-GroES system forms a nano-cage that allows encapsulation of the non-native substrate proteins and provides a physical environment optimized to promote and accelerate protein folding. The polypeptide is Chaperonin GroEL (Mycobacterium scrofulaceum).